The sequence spans 334 residues: Protein-methionine-sulfoxide reductase catalytic subunit MsrP (334 aa).

The tat-type signal signal peptide spans 1 to 44 (MKKNQFLKESDVTAESVFFMKRRQVLKALGISAAALSLPHAAHA). Residues N88, 91–92 (YE), C146, T181, N233, R238, and 249–251 (GIK) each bind Mo-molybdopterin.

It belongs to the MsrP family. As to quaternary structure, heterodimer of a catalytic subunit (MsrP) and a heme-binding subunit (MsrQ). Mo-molybdopterin is required as a cofactor. In terms of processing, predicted to be exported by the Tat system. The position of the signal peptide cleavage has not been experimentally proven.

The protein resides in the periplasm. It catalyses the reaction L-methionyl-[protein] + a quinone + H2O = L-methionyl-(S)-S-oxide-[protein] + a quinol. The enzyme catalyses L-methionyl-[protein] + a quinone + H2O = L-methionyl-(R)-S-oxide-[protein] + a quinol. Part of the MsrPQ system that repairs oxidized periplasmic proteins containing methionine sulfoxide residues (Met-O), using respiratory chain electrons. Thus protects these proteins from oxidative-stress damage caused by reactive species of oxygen and chlorine generated by the host defense mechanisms. MsrPQ is essential for the maintenance of envelope integrity under bleach stress, rescuing a wide series of structurally unrelated periplasmic proteins from methionine oxidation, including the primary periplasmic chaperone SurA and the lipoprotein Pal. The catalytic subunit MsrP is non-stereospecific, being able to reduce both (R-) and (S-) diastereoisomers of methionine sulfoxide. This chain is Protein-methionine-sulfoxide reductase catalytic subunit MsrP, found in Escherichia coli O17:K52:H18 (strain UMN026 / ExPEC).